A 184-amino-acid polypeptide reads, in one-letter code: MRLAFVTSNPGKVEEARKYFEPLGVEVYQLKVSYPEIQADTLEEVAEYGAKWLAQRVDGPFFLDDSGLFVEALKGFPGVYSAYVYKTIGYQGILKLLQGEKNRKAHFKSVIAYWDGELHIFTGRVDGKIATEPRGSGGFGFDPIFIPEGFDRTFAEMTTEEKNRISHRGRALREFANWLKENLK.

7–12 (TSNPGK) lines the substrate pocket. Positions 36 and 65 each coordinate Mg(2+). D65 (proton acceptor) is an active-site residue. Substrate contacts are provided by residues S66, 139–142 (FGFD), K162, and 167–168 (HR).

This sequence belongs to the HAM1 NTPase family. In terms of assembly, homodimer. Mg(2+) serves as cofactor.

It catalyses the reaction XTP + H2O = XMP + diphosphate + H(+). The catalysed reaction is dITP + H2O = dIMP + diphosphate + H(+). The enzyme catalyses ITP + H2O = IMP + diphosphate + H(+). In terms of biological role, pyrophosphatase that catalyzes the hydrolysis of nucleoside triphosphates to their monophosphate derivatives, with a high preference for the non-canonical purine nucleotides XTP (xanthosine triphosphate), dITP (deoxyinosine triphosphate) and ITP. Seems to function as a house-cleaning enzyme that removes non-canonical purine nucleotides from the nucleotide pool, thus preventing their incorporation into DNA/RNA and avoiding chromosomal lesions. The protein is dITP/XTP pyrophosphatase of Thermococcus kodakarensis (strain ATCC BAA-918 / JCM 12380 / KOD1) (Pyrococcus kodakaraensis (strain KOD1)).